The primary structure comprises 177 residues: Large ribosomal subunit protein uL6 (177 aa).

The protein belongs to the universal ribosomal protein uL6 family. As to quaternary structure, part of the 50S ribosomal subunit.

Its function is as follows. This protein binds to the 23S rRNA, and is important in its secondary structure. It is located near the subunit interface in the base of the L7/L12 stalk, and near the tRNA binding site of the peptidyltransferase center. This Hydrogenovibrio crunogenus (strain DSM 25203 / XCL-2) (Thiomicrospira crunogena) protein is Large ribosomal subunit protein uL6.